The primary structure comprises 475 residues: Glutamate--tRNA ligase (475 aa).

The 'HIGH' region motif lies at 11 to 21; sequence PSPTGFLHIGG. Residues 240 to 244 carry the 'KMSKS' region motif; that stretch reads KLSKR. Lys-243 is an ATP binding site.

This sequence belongs to the class-I aminoacyl-tRNA synthetase family. Glutamate--tRNA ligase type 1 subfamily. As to quaternary structure, monomer.

It is found in the cytoplasm. It carries out the reaction tRNA(Glu) + L-glutamate + ATP = L-glutamyl-tRNA(Glu) + AMP + diphosphate. Its function is as follows. Catalyzes the attachment of glutamate to tRNA(Glu) in a two-step reaction: glutamate is first activated by ATP to form Glu-AMP and then transferred to the acceptor end of tRNA(Glu). The chain is Glutamate--tRNA ligase from Bradyrhizobium diazoefficiens (strain JCM 10833 / BCRC 13528 / IAM 13628 / NBRC 14792 / USDA 110).